The sequence spans 519 residues: Cell division cycle protein 20 homolog B (519 aa).

Positions 77-106 are disordered; sequence WQLSPARDPESSSSVEEGPPSHTPESLASG. Residues 87-96 are compositionally biased toward low complexity; it reads SSSSVEEGPP. 6 WD repeats span residues 229-266, 271-310, 353-392, 399-441, 443-484, and 487-519; these read RNDYYLNTLDWSSQNLVAVALGTSVYIWNGQNHSWIEN, VCCHYVSSVTWMREGSCLAVGTSEGEVQLWDAITKKQLRN, YHKEAVCSLKWSPDGRLLSSGCNDGLLTIWPHDPGAGVQG, PQST…NIQT, STQS…RSGG, and GHRDRVLHLSLSPDQTRLFSAAADGTACVWKCC.

This sequence belongs to the WD repeat CDC20/Fizzy family. Expressed in multiciliated cells (MCCs).

Its subcellular location is the cytoplasm. Its function is as follows. Protein regulator of centriole-deuterosome disengagement and subsequently participates in the ciliogenesis in multiciliated cells (MCCs). This chain is Cell division cycle protein 20 homolog B, found in Mus musculus (Mouse).